A 312-amino-acid polypeptide reads, in one-letter code: Uracil-DNA glycosylase (312 aa).

Positions 1-11 are enriched in basic and acidic residues; sequence MSSACDHETEA. Positions 1–61 are disordered; that stretch reads MSSACDHETE…PPKRRRPCGL (61 aa). Residues 22–33 show a composition bias toward polar residues; sequence EENGSNSSTPTS. Asp155 acts as the Proton acceptor in catalysis.

This sequence belongs to the uracil-DNA glycosylase (UDG) superfamily. UNG family.

The protein resides in the host nucleus. It catalyses the reaction Hydrolyzes single-stranded DNA or mismatched double-stranded DNA and polynucleotides, releasing free uracil.. In terms of biological role, excises uracil residues from the DNA which can arise as a result of misincorporation of dUMP residues by DNA polymerase or deamination of cytosines. Therefore may reduce deleterious uracil incorporation into the viral genome, particularly in terminally differentiated cells which lack DNA repair enzymes. In Equine herpesvirus 1 (strain V592) (EHV-1), this protein is Uracil-DNA glycosylase (61).